Here is an 889-residue protein sequence, read N- to C-terminus: Terminal uridylyltransferase 3 (889 aa).

Residues 123–151 (VRCDLCAKMIESRDEEQIQEHFQVHHAAL) form a C2H2-type; atypical zinc finger. 4 residues coordinate Zn(2+): C125, C128, H143, and H148. Residues S225 and 236 to 239 (SDAD) contribute to the UTP site. 2 residues coordinate Mg(2+): D237 and D239. R286 is a binding site for RNA. UTP contacts are provided by residues 394–398 (GVRNS), K419, K423, and 437–438 (SY). The 68-residue stretch at 505–572 (LGGLIPLFFL…LCIDDPYEDN (68 aa)) folds into the PAP-associated domain. Positions 565–574 (IDDPYEDNFN) match the Nucleotide recognition motif (NRM) motif. Disordered regions lie at residues 675–702 (NNKSKEGDDDAEGVTNNQEGEPPDHVES) and 829–849 (RKKSKGSKKRKNAVRRGNHAG). Basic residues predominate over residues 829–846 (RKKSKGSKKRKNAVRRGN).

Belongs to the DNA polymerase type-B-like family. Requires Mg(2+) as cofactor. Mn(2+) is required as a cofactor.

Its subcellular location is the cytoplasm. The catalysed reaction is RNA(n) + UTP = RNA(n)-3'-uridine ribonucleotide + diphosphate. In terms of biological role, terminal uridylyltransferase which catalyzes the addition of Us to the 3'-hydroxyl group of single-stranded RNAs. Does not mediate RNA-independent UTP polymerization. In Trypanosoma brucei brucei, this protein is Terminal uridylyltransferase 3.